Reading from the N-terminus, the 503-residue chain is Ell-associated factor Eaf (503 aa).

Polar residues-rich tracts occupy residues 119 to 145 (TRNEVSNKSVQLPGQNMGQGQPHNQGA) and 167 to 186 (ENSTMRISTKTKVSTGSRRN). 3 disordered regions span residues 119 to 220 (TRNE…PAWD), 250 to 360 (GHAN…SQSV), and 372 to 503 (GGVL…DDDD). Serine 196 carries the phosphoserine modification. The span at 202–215 (SPSRPVPVHRSPQS) shows a compositional bias: low complexity. Polar residues-rich tracts occupy residues 250-273 (GHANRSGSAAGQPDFVSTSSSTHI) and 298-307 (MAQQQQQHPS). Low complexity predominate over residues 308–337 (NYGRGYNGGHNHAQQQQQQQRNSPPRQRPS). Positions 385-400 (DSSDSDSGSDSDDSTE) are enriched in acidic residues. Low complexity-rich tracts occupy residues 406–437 (QGQQQDHQQQPHQVYQNHNHTQQQVTQQHHNQ), 454–472 (HQQQHQQQMLQHQQKQKQQ), and 487–497 (LQNDLQLSSNS).

Belongs to the EAF family.

Its subcellular location is the nucleus. Promotes transcriptional elongation by Su(Tpl)/ELL. Essential for development. This chain is Ell-associated factor Eaf, found in Drosophila sechellia (Fruit fly).